The following is a 168-amino-acid chain: Gremlin-2 (168 aa).

The signal sequence occupies residues 1-21 (MFWKLSLSLFLVAVLVKVAEA). Asn-40 is a glycosylation site (N-linked (GlcNAc...) asparagine). 4 disulfide bridges follow: Cys-73–Cys-123, Cys-87–Cys-137, Cys-97–Cys-155, and Cys-101–Cys-157. A CTCK domain is found at 73–163 (CKTQPLRQTV…QCRCMSVNLS (91 aa)). Asn-161 is a glycosylation site (N-linked (GlcNAc...) asparagine).

The protein belongs to the DAN family. Homodimer. Interacts with BMP2, BMP4 and BMP7, but has lower affinity for BMP7 than for BMP2 and BMP4. Binds heparin; this impairs the interaction with BMP2. N-glycosylated.

It is found in the secreted. Its function is as follows. Cytokine that inhibits the activity of BMP2 and BMP4 in a dose-dependent manner, and thereby modulates signaling by BMP family members. Contributes to the regulation of embryonic morphogenesis via BMP family members. Antagonizes BMP4-induced suppression of progesterone production in granulosa cells. This Homo sapiens (Human) protein is Gremlin-2 (GREM2).